Consider the following 162-residue polypeptide: Large ribosomal subunit protein bL17 (162 aa).

The tract at residues 126–162 (ATAKKATRTRRSKKSAAATEAPAAPAAETTEEAPKAE) is disordered. The segment covering 130–139 (KATRTRRSKK) has biased composition (basic residues). Positions 140–153 (SAAATEAPAAPAAE) are enriched in low complexity.

This sequence belongs to the bacterial ribosomal protein bL17 family. In terms of assembly, part of the 50S ribosomal subunit. Contacts protein L32.

In Phocaeicola vulgatus (strain ATCC 8482 / DSM 1447 / JCM 5826 / CCUG 4940 / NBRC 14291 / NCTC 11154) (Bacteroides vulgatus), this protein is Large ribosomal subunit protein bL17.